The primary structure comprises 220 residues: Deoxyribose-phosphate aldolase (220 aa).

D89 acts as the Proton donor/acceptor in catalysis. K152 (schiff-base intermediate with acetaldehyde) is an active-site residue. The active-site Proton donor/acceptor is the K181.

It belongs to the DeoC/FbaB aldolase family. DeoC type 1 subfamily.

The protein localises to the cytoplasm. The catalysed reaction is 2-deoxy-D-ribose 5-phosphate = D-glyceraldehyde 3-phosphate + acetaldehyde. Its pathway is carbohydrate degradation; 2-deoxy-D-ribose 1-phosphate degradation; D-glyceraldehyde 3-phosphate and acetaldehyde from 2-deoxy-alpha-D-ribose 1-phosphate: step 2/2. Its function is as follows. Catalyzes a reversible aldol reaction between acetaldehyde and D-glyceraldehyde 3-phosphate to generate 2-deoxy-D-ribose 5-phosphate. In Enterococcus faecalis (strain ATCC 700802 / V583), this protein is Deoxyribose-phosphate aldolase.